We begin with the raw amino-acid sequence, 409 residues long: F-box/kelch-repeat protein At1g48625 (409 aa).

The region spanning 2-49 is the F-box domain; the sequence is ATMISNLPRDLMEEILSRVPLKSMRAVRLTCKNWHTLSITISESLAKM. Kelch repeat units follow at residues 169–218 and 221–266; these read FIDY…LKGN and WCAR…ILSC.

The chain is F-box/kelch-repeat protein At1g48625 from Arabidopsis thaliana (Mouse-ear cress).